Reading from the N-terminus, the 357-residue chain is MAAAAKPSNLSLVVHGPGDLRLENYPIPEPGPNEVLLRMHSVGICGSDVHYWEDGRIGNFIVKKPMVLGHEASGTVEKVGSLVKHLKPGDRVAIEPGAPRENDEFCKIGRYNLSPSIFFCATPPDDGNLCRFYKHNAAFCYKLPDNVTFEEGAMIEPLSVGIHACRRGGVTLGHKVLVCGAGPIGMVTLLVAKAMGAAQVVVTDLSATRLSKAKEIGADLVLQISKESPQEIARKVEGLLGCKPEVTIECTGAGASIQAGIYATHSGGTLVLVGLGSEMTTIPLLHAAIREVDIKGVFRYCNTWPVAISMLASKSVNVKPLITHRFPLEKALEAFETFKKGLGLKIMLKCDPNDQNP.

Residue A2 is modified to N-acetylalanine. A Zn(2+)-binding site is contributed by C45. A substrate-binding site is contributed by Y51. Zn(2+)-binding residues include H70 and E71. Residue E156 coordinates substrate. NAD(+) contacts are provided by I184, D204, and R209. Residues S211 and S225 each carry the phosphoserine modification. NAD(+) is bound by residues 273-275 (VGL) and 297-299 (VFR). Substrate-binding residues include R299 and Y300.

This sequence belongs to the zinc-containing alcohol dehydrogenase family. In terms of assembly, homotetramer. Zn(2+) is required as a cofactor.

It is found in the mitochondrion membrane. It localises to the cell projection. The protein resides in the cilium. Its subcellular location is the flagellum. The enzyme catalyses xylitol + NAD(+) = D-xylulose + NADH + H(+). It carries out the reaction L-iditol + NAD(+) = keto-L-sorbose + NADH + H(+). It catalyses the reaction keto-D-fructose + NADH + H(+) = D-sorbitol + NAD(+). Polyol dehydrogenase that catalyzes the reversible NAD(+)-dependent oxidation of various sugar alcohols. Is active with xylitol, L-iditol and D-sorbitol (D-glucitol) as substrates, leading to the C2-oxidized products D-xylulose, L-sorbose and D-fructose, respectively. Is a key enzyme in the polyol pathway that interconverts glucose and fructose via sorbitol, which constitutes an important alternate route for glucose metabolism. May play a role in sperm motility by using sorbitol as an alternative energy source for sperm motility. This is Sorbitol dehydrogenase (SORD) from Pongo abelii (Sumatran orangutan).